The primary structure comprises 134 residues: Large ribosomal subunit protein bL19 (134 aa).

The segment at 110-134 is disordered; the sequence is ARLHQEEGPSSAAPASTPPAAAPQA. Residues 125–134 are compositionally biased toward pro residues; that stretch reads STPPAAAPQA.

This sequence belongs to the bacterial ribosomal protein bL19 family.

Functionally, this protein is located at the 30S-50S ribosomal subunit interface and may play a role in the structure and function of the aminoacyl-tRNA binding site. The protein is Large ribosomal subunit protein bL19 of Anaeromyxobacter sp. (strain Fw109-5).